The sequence spans 632 residues: Probable potassium transport system protein Kup 1 (632 aa).

12 consecutive transmembrane segments (helical) span residues 19-39, 59-79, 110-130, 146-166, 178-198, 213-233, 256-276, 298-318, 346-366, 373-393, 403-423, and 428-448; these read LVLGAVGVVFGDIGTSPLYAL, VISMLFWAMIIVVSIKYVVFV, VLMMLGIFGACMFYGDAVITP, PQLSQFVIPITLMILAALFLI, FGPIMTAWFLALGGLGILHLV, ITFLVEHALQAFIVLGSVFLV, WFVLVMPCLMLNYFGQGAMLL, MVLLATCATVIASQAVISGAF, IYLPVINWLLLVLVIGVVISF, AAAYGIAVTTTMVITTILAAV, PALVAVVGLAFIVVDLSFFAA, and VAEGGWFPLLLGSAAFFLLMT.

This sequence belongs to the HAK/KUP transporter (TC 2.A.72) family.

The protein resides in the cell inner membrane. It catalyses the reaction K(+)(in) + H(+)(in) = K(+)(out) + H(+)(out). In terms of biological role, transport of potassium into the cell. Likely operates as a K(+):H(+) symporter. The chain is Probable potassium transport system protein Kup 1 from Cupriavidus necator (strain ATCC 17699 / DSM 428 / KCTC 22496 / NCIMB 10442 / H16 / Stanier 337) (Ralstonia eutropha).